The chain runs to 694 residues: Nucleolin (694 aa).

Residues 1–277 (MVKLAKTPKN…EAKKKKTETP (277 aa)) are disordered. The span at 26–40 (ESEEEESSDLEESSG) shows a compositional bias: acidic residues. Low complexity predominate over residues 46–108 (PPKKQQKAAV…AVVGKGAKNG (63 aa)). 5 consecutive repeat copies span residues 55-61 (VTPAKKA), 62-68 (ATPAKKA), 69-75 (ATPAKKA), 76-82 (VTPAKKA), and 84-90 (ATPAKKA). The 5 X 7 AA tandem repeats of X-T-P-X-K-K-X stretch occupies residues 55–90 (VTPAKKAATPAKKAATPAKKAVTPAKKAVATPAKKA). 2 positions are modified to phosphoserine: S116 and S136. Residues 116 to 142 (SEEEDEDDEDDEEDEDEEEESDEEEEP) are compositionally biased toward acidic residues. Residues 143 to 168 (AVPVKPAAKKSAAAVPAKKPAVVPAK) show a composition bias toward low complexity. At S171 the chain carries Phosphoserine. Positions 171–194 (SEEEEEEDDEEEDEEDDESEDEAM) are enriched in acidic residues. A compositionally biased stretch (low complexity) spans 196 to 213 (TTPAPVKKPTPAKATPAK). Residues 218–246 (SEDEEDEEDEDEDEEDEDDEEEDEEESED) show a composition bias toward acidic residues. RRM domains follow at residues 281 to 357 (FSLF…KAKS), 371 to 445 (RTLF…YTGE), 461 to 535 (KTLI…FSSP), and 553 to 628 (KTLF…FAKP). The interval 631-694 (EFQRGGGFGG…KPQGKKIKFE (64 aa)) is disordered. Over residues 633-680 (QRGGGFGGGFGGRGGRGGRGGGRGGFGGRGGGRGFGGRGGGFRGGRGG) the composition is skewed to gly residues. Over residues 681 to 694 (GGDHKPQGKKIKFE) the composition is skewed to basic and acidic residues.

In terms of processing, highly phosphorylated during mitosis.

Its subcellular location is the nucleus. It is found in the nucleolus. Functionally, nucleolin is the major nucleolar protein of growing eukaryotic cells. It is found associated with intranucleolar chromatin and pre-ribosomal particles. It induces chromatin decondensation by binding to histone H1. It is thought to play a role in pre-rRNA transcription and ribosome assembly. The polypeptide is Nucleolin (NCL) (Gallus gallus (Chicken)).